The primary structure comprises 664 residues: Sorbicillinoid biosynthetic cluster transcription factor sor3 (664 aa).

The segment at residues 40–67 is a DNA-binding region (zn(2)-C6 fungal-type); that stretch reads CQSCRASKVKCDGGRPVCARCQKRGRAC. Positions 68-102 are disordered; it reads SYSQHDAASPRGRGRQRAKAPTRQPRPIRSRASVE.

The protein localises to the nucleus. Its function is as follows. Transcription factor that acts in concert with sor4 which is a transcriptional activator of the gene cluster that mediates the biosynthesis of sorbicillinoids, a diverse group of yellow secondary metabolites that restrict growth of competing pathogenic fungi but not of bacteria. Regulates the cluster genes in a light dependent manner. Also plays a direct or indirect role in regulation of paracelsin biosynthesis and cellulase gene expression. The sequence is that of Sorbicillinoid biosynthetic cluster transcription factor sor3 from Hypocrea jecorina (strain QM6a) (Trichoderma reesei).